We begin with the raw amino-acid sequence, 845 residues long: Beta-glucosidase B (845 aa).

The N-linked (GlcNAc...) asparagine glycan is linked to Asn202. Asp230 is a catalytic residue. Asn235 is a glycosylation site (N-linked (GlcNAc...) asparagine). One can recognise a PA14 domain in the interval 406 to 557 (EGQPGWTLDF…HNRDLLSEAV (152 aa)). N-linked (GlcNAc...) asparagine glycans are attached at residues Asn591, Asn612, and Asn794.

The protein belongs to the glycosyl hydrolase 3 family.

It catalyses the reaction Hydrolysis of terminal, non-reducing beta-D-glucosyl residues with release of beta-D-glucose.. It functions in the pathway glycan metabolism; cellulose degradation. In terms of biological role, beta-glucosidases are one of a number of cellulolytic enzymes involved in the degradation of cellulosic biomass. Catalyzes the last step releasing glucose from the inhibitory cellobiose. In Emericella nidulans (strain FGSC A4 / ATCC 38163 / CBS 112.46 / NRRL 194 / M139) (Aspergillus nidulans), this protein is Beta-glucosidase B (bglB).